A 715-amino-acid chain; its full sequence is Protein DOA1 (715 aa).

7 WD repeats span residues Gly11–Ser40, Gly53–Pro82, Gly97–Lys125, Ala135–Gln166, Ile177–Asp206, Gly218–Ser247, and Leu259–Ser288. Ser332 bears the Phosphoserine mark. The region spanning Ala352–Asp449 is the PFU domain. Residues Phe434 to Asn440 are interaction with HSE1. Residues Lys465–Ser715 form the PUL domain. ARM repeat units lie at residues Tyr478–Ile512, Asp513–Ile543, Val544–Asn582, Glu583–Lys635, Gly636–Val680, and Glu681–Ser715.

It belongs to the WD repeat PLAP family. Forms a complex composed of CDC48, NPL4, UFD1, DOA1, SHP1 and deubiquitinase OTU1; within the complex interacts with CDC48. Interacts (via PUL domain) with CDC48 (via C-terminus); the interaction is direct. Forms a complex composed of CDC48, DOA1, deubiquitinase UBP3 and probably BRE5; within the complex interacts with CDC48 and UBP3. May form a complex composed of VPS27, HSE1 and DOA1. Interacts with HSE1 (via SH3 domain). Interacts (via WD repeats and PFU domain) with ubiquitin; the interaction is direct. Interacts with ubiquitinated FZO1 but not unmodified FZO1; the interaction recruits FZO1 to CDC48 and promotes FZO1 proteasomal degradation.

Its subcellular location is the nucleus. The protein localises to the cytoplasm. The protein resides in the mitochondrion outer membrane. It is found in the endosome membrane. Its function is as follows. Ubiquitin-binding protein involved in protein ubiquitination, sorting and degradation. Acts as a ubiquitinated substrate-recruiting adapter for chaperone ATPase CDC48 by binding mono- or polyubiquitin chains. Depending on the context, promotes or prevents proteasomal degradation of ubiquitinated proteins. Involved in the ubiquitin fusion degradation (UFD) pathway by promoting the degradation of ubiquitinated proteins. Involved in the mitochondria-associated degradation pathway (MAD) by promoting the degradation of several ubiquitinated membrane proteins. By competing with UFD2 to bind CDC48, prevents the multi-ubiquitination and subsequent degradation of UFD2-dependent substrates. Required for ribophagy, a process which relocalizes ribosomal particles into the vacuole for degradation in response to starvation. Involved in the ubiquitin-mediated sorting of membrane proteins into multivesicular bodies (MVBs). In addition, plays an essential role in maintaining cellular ubiquitin levels. May affect indirectly the degradation of ubiquitinylated proteins by regulating cellular ubiquitin levels. The protein is Protein DOA1 of Saccharomyces cerevisiae (strain ATCC 204508 / S288c) (Baker's yeast).